The following is a 244-amino-acid chain: Small ribosomal subunit protein eS4 (244 aa).

One can recognise an S4 RNA-binding domain in the interval 43–108; sequence LPLLLIVRDI…NYRVLFDRKG (66 aa).

This sequence belongs to the eukaryotic ribosomal protein eS4 family.

The sequence is that of Small ribosomal subunit protein eS4 (rps4e) from Methanocaldococcus jannaschii (strain ATCC 43067 / DSM 2661 / JAL-1 / JCM 10045 / NBRC 100440) (Methanococcus jannaschii).